A 212-amino-acid polypeptide reads, in one-letter code: Uracil phosphoribosyltransferase (212 aa).

5-phospho-alpha-D-ribose 1-diphosphate is bound by residues R78, R103, and 130–138 (DPMLATGGS). Uracil contacts are provided by residues I193 and 198–200 (GDA). D199 contributes to the 5-phospho-alpha-D-ribose 1-diphosphate binding site.

Belongs to the UPRTase family. Requires Mg(2+) as cofactor.

It catalyses the reaction UMP + diphosphate = 5-phospho-alpha-D-ribose 1-diphosphate + uracil. Its pathway is pyrimidine metabolism; UMP biosynthesis via salvage pathway; UMP from uracil: step 1/1. Its activity is regulated as follows. Allosterically activated by GTP. Catalyzes the conversion of uracil and 5-phospho-alpha-D-ribose 1-diphosphate (PRPP) to UMP and diphosphate. This chain is Uracil phosphoribosyltransferase, found in Azotobacter vinelandii (strain DJ / ATCC BAA-1303).